The primary structure comprises 405 residues: S-adenosylmethionine synthase (405 aa).

Residue 141 to 146 (GQGSVD) coordinates ATP.

It belongs to the AdoMet synthase 2 family. Mg(2+) is required as a cofactor.

It carries out the reaction L-methionine + ATP + H2O = S-adenosyl-L-methionine + phosphate + diphosphate. The protein operates within amino-acid biosynthesis; S-adenosyl-L-methionine biosynthesis; S-adenosyl-L-methionine from L-methionine: step 1/1. Catalyzes the formation of S-adenosylmethionine from methionine and ATP. In Methanococcus maripaludis (strain C7 / ATCC BAA-1331), this protein is S-adenosylmethionine synthase.